The primary structure comprises 131 residues: UPF0251 protein MMP0619 (131 aa).

Belongs to the UPF0251 family.

This chain is UPF0251 protein MMP0619, found in Methanococcus maripaludis (strain DSM 14266 / JCM 13030 / NBRC 101832 / S2 / LL).